A 308-amino-acid chain; its full sequence is ATP synthase gamma chain (308 aa).

Belongs to the ATPase gamma chain family. F-type ATPases have 2 components, CF(1) - the catalytic core - and CF(0) - the membrane proton channel. CF(1) has five subunits: alpha(3), beta(3), gamma(1), delta(1), epsilon(1). CF(0) has three main subunits: a, b and c.

The protein resides in the cell membrane. Its function is as follows. Produces ATP from ADP in the presence of a proton gradient across the membrane. The gamma chain is believed to be important in regulating ATPase activity and the flow of protons through the CF(0) complex. This Lacticaseibacillus paracasei (strain ATCC 334 / BCRC 17002 / CCUG 31169 / CIP 107868 / KCTC 3260 / NRRL B-441) (Lactobacillus paracasei) protein is ATP synthase gamma chain.